The chain runs to 573 residues: 60 kDa heat shock protein, mitochondrial (573 aa).

A mitochondrion-targeting transit peptide spans 1 to 26; it reads MLRLPAVLRQIRPVSRALAPHLTRAY. ATP contacts are provided by residues K75 and 111-115; that span reads DGTTT. Y227 is subject to Phosphotyrosine. ATP contacts are provided by G440 and D520.

It is found in the mitochondrion matrix. It catalyses the reaction ATP + H2O + a folded polypeptide = ADP + phosphate + an unfolded polypeptide.. Its function is as follows. Chaperonin implicated in mitochondrial protein import and macromolecular assembly. Together with Hsp10, facilitates the correct folding of imported proteins. May also prevent misfolding and promote the refolding and proper assembly of unfolded polypeptides generated under stress conditions in the mitochondrial matrix. The functional units of these chaperonins consist of heptameric rings of the large subunit Hsp60, which function as a back-to-back double ring. In a cyclic reaction, Hsp60 ring complexes bind one unfolded substrate protein per ring, followed by the binding of ATP and association with 2 heptameric rings of the co-chaperonin Hsp10. This leads to sequestration of the substrate protein in the inner cavity of Hsp60 where, for a certain period of time, it can fold undisturbed by other cell components. Synchronous hydrolysis of ATP in all Hsp60 subunits results in the dissociation of the chaperonin rings and the release of ADP and the folded substrate protein. The sequence is that of 60 kDa heat shock protein, mitochondrial from Gallus gallus (Chicken).